A 454-amino-acid polypeptide reads, in one-letter code: Glutaredoxin domain-containing cysteine-rich protein CG31559 (454 aa).

Disordered regions lie at residues 30-88 (ETAD…QRQK) and 217-239 (RSARSGDEADHSTGAGSEAGSDS). A compositionally biased stretch (polar residues) spans 33–45 (DSGNGSDLESTGL). The segment covering 58 to 69 (SSLGSDSMHGSS) has biased composition (low complexity). Polar residues predominate over residues 70 to 84 (TEYVRQSASQPSGQR). Residues 217–227 (RSARSGDEADH) are compositionally biased toward basic and acidic residues. The 106-residue stretch at 295-400 (NAKNFKEKDL…QLLKPYKSMA (106 aa)) folds into the Glutaredoxin domain.

It belongs to the GRXCR1 family.

The chain is Glutaredoxin domain-containing cysteine-rich protein CG31559 from Drosophila melanogaster (Fruit fly).